Reading from the N-terminus, the 94-residue chain is MLKPLGDRIVIEVVETEEKTASGIVLPDTAKEKPQEGRVVAVGAGRVLDNGQRIGRKSKVGDRVIFSKYAGTEVKYDGKEYLILRESDILAVIR.

The protein belongs to the GroES chaperonin family. In terms of assembly, heptamer of 7 subunits arranged in a ring. Interacts with the chaperonin GroEL.

It is found in the cytoplasm. Functionally, together with the chaperonin GroEL, plays an essential role in assisting protein folding. The GroEL-GroES system forms a nano-cage that allows encapsulation of the non-native substrate proteins and provides a physical environment optimized to promote and accelerate protein folding. GroES binds to the apical surface of the GroEL ring, thereby capping the opening of the GroEL channel. In Bacillus sp. (strain PS3), this protein is Co-chaperonin GroES.